The following is a 510-amino-acid chain: Ferredoxin--nitrite reductase (510 aa).

The [4Fe-4S] cluster site is built by Cys396, Cys402, Cys437, and Cys441. Cys441 lines the siroheme pocket.

It belongs to the nitrite and sulfite reductase 4Fe-4S domain family.

The catalysed reaction is 6 oxidized [2Fe-2S]-[ferredoxin] + NH4(+) + 2 H2O = nitrite + 6 reduced [2Fe-2S]-[ferredoxin] + 8 H(+). This chain is Ferredoxin--nitrite reductase (nirA), found in Leptolyngbya laminosa (Phormidium laminosum).